Consider the following 227-residue polypeptide: ATP phosphoribosyltransferase (227 aa).

The protein belongs to the ATP phosphoribosyltransferase family. Short subfamily. As to quaternary structure, heteromultimer composed of HisG and HisZ subunits.

It is found in the cytoplasm. It catalyses the reaction 1-(5-phospho-beta-D-ribosyl)-ATP + diphosphate = 5-phospho-alpha-D-ribose 1-diphosphate + ATP. It functions in the pathway amino-acid biosynthesis; L-histidine biosynthesis; L-histidine from 5-phospho-alpha-D-ribose 1-diphosphate: step 1/9. Its function is as follows. Catalyzes the condensation of ATP and 5-phosphoribose 1-diphosphate to form N'-(5'-phosphoribosyl)-ATP (PR-ATP). Has a crucial role in the pathway because the rate of histidine biosynthesis seems to be controlled primarily by regulation of HisG enzymatic activity. The polypeptide is ATP phosphoribosyltransferase (Rhodospirillum rubrum (strain ATCC 11170 / ATH 1.1.1 / DSM 467 / LMG 4362 / NCIMB 8255 / S1)).